A 203-amino-acid chain; its full sequence is Peptidyl-tRNA hydrolase (203 aa).

Tyrosine 18 contributes to the tRNA binding site. Histidine 23 functions as the Proton acceptor in the catalytic mechanism. TRNA is bound by residues tyrosine 69, asparagine 71, and asparagine 117.

Belongs to the PTH family. In terms of assembly, monomer.

The protein localises to the cytoplasm. It carries out the reaction an N-acyl-L-alpha-aminoacyl-tRNA + H2O = an N-acyl-L-amino acid + a tRNA + H(+). In terms of biological role, hydrolyzes ribosome-free peptidyl-tRNAs (with 1 or more amino acids incorporated), which drop off the ribosome during protein synthesis, or as a result of ribosome stalling. Functionally, catalyzes the release of premature peptidyl moieties from peptidyl-tRNA molecules trapped in stalled 50S ribosomal subunits, and thus maintains levels of free tRNAs and 50S ribosomes. The polypeptide is Peptidyl-tRNA hydrolase (Parasynechococcus marenigrum (strain WH8102)).